A 390-amino-acid polypeptide reads, in one-letter code: Elongation factor Ts 2, mitochondrial (390 aa).

A mitochondrion-targeting transit peptide spans 1-24 (MMIFSTAVLRLCATSRIGAVTKRA). Over residues 30-40 (SSASSSSSSSS) the composition is skewed to low complexity. A disordered region spans residues 30–54 (SSASSSSSSSSPTQSMPPQRYTHHQ).

It belongs to the EF-Ts family.

Its subcellular location is the mitochondrion. Its function is as follows. Associates with the EF-Tu.GDP complex and induces the exchange of GDP to GTP. It remains bound to the aminoacyl-tRNA.EF-Tu.GTP complex up to the GTP hydrolysis stage on the ribosome. The protein is Elongation factor Ts 2, mitochondrial of Thalassiosira pseudonana (Marine diatom).